The chain runs to 287 residues: MLKKVLNGTRIAKKLEFKILKQVNYKLSLGQRPPGLAVILIGSNSASTIYVKKKRFMCEQVGFISKFWKFSKNIQESKILNLIYKLNYDTTIDGILVQLPIPPNINNQKLFSSIIPTKDVDGFHPYNIGSLCQKSPYLRPCTPFGIITMLKHYKIKIRGLHAVVIGASNIVGRPMSMELLLAGCTTTITHRFTKNLKHYVKQADLIVIAIGHAHFLKGTWIKKGAIVIDVGINRLKNGEIVGDVDFKTAYKKSSYITPVPGGVGPMTVITLLNNTLKAYEQISKDCK.

Residues 166–168 (GAS) and Ile232 contribute to the NADP(+) site.

This sequence belongs to the tetrahydrofolate dehydrogenase/cyclohydrolase family. Homodimer.

It carries out the reaction (6R)-5,10-methylene-5,6,7,8-tetrahydrofolate + NADP(+) = (6R)-5,10-methenyltetrahydrofolate + NADPH. The enzyme catalyses (6R)-5,10-methenyltetrahydrofolate + H2O = (6R)-10-formyltetrahydrofolate + H(+). The protein operates within one-carbon metabolism; tetrahydrofolate interconversion. In terms of biological role, catalyzes the oxidation of 5,10-methylenetetrahydrofolate to 5,10-methenyltetrahydrofolate and then the hydrolysis of 5,10-methenyltetrahydrofolate to 10-formyltetrahydrofolate. The chain is Bifunctional protein FolD from Buchnera aphidicola subsp. Baizongia pistaciae (strain Bp).